We begin with the raw amino-acid sequence, 434 residues long: Adenylosuccinate synthetase (434 aa).

GTP is bound by residues 15–21 (GDEGKGK) and 43–45 (GHT). Asp-16 (proton acceptor) is an active-site residue. Residues Asp-16 and Gly-43 each coordinate Mg(2+). IMP-binding positions include 16 to 19 (DEGK), 41 to 44 (NAGH), Thr-133, Arg-147, Gln-228, Thr-243, and Arg-307. Residue His-44 is the Proton donor of the active site. Substrate is bound at residue 303–309 (SVTGRAR). GTP is bound by residues Arg-309, 335–337 (KLD), and 418–420 (STG).

This sequence belongs to the adenylosuccinate synthetase family. As to quaternary structure, homodimer. Mg(2+) serves as cofactor.

The protein localises to the cytoplasm. It catalyses the reaction IMP + L-aspartate + GTP = N(6)-(1,2-dicarboxyethyl)-AMP + GDP + phosphate + 2 H(+). It functions in the pathway purine metabolism; AMP biosynthesis via de novo pathway; AMP from IMP: step 1/2. Plays an important role in the de novo pathway of purine nucleotide biosynthesis. Catalyzes the first committed step in the biosynthesis of AMP from IMP. This Neisseria meningitidis serogroup C / serotype 2a (strain ATCC 700532 / DSM 15464 / FAM18) protein is Adenylosuccinate synthetase.